Here is a 503-residue protein sequence, read N- to C-terminus: Cytochrome P450 3A12 (503 aa).

Residue cysteine 442 participates in heme binding.

The protein belongs to the cytochrome P450 family. The cofactor is heme.

It localises to the endoplasmic reticulum membrane. The protein resides in the microsome membrane. The catalysed reaction is an organic molecule + reduced [NADPH--hemoprotein reductase] + O2 = an alcohol + oxidized [NADPH--hemoprotein reductase] + H2O + H(+). Its function is as follows. Cytochromes P450 are a group of heme-thiolate monooxygenases. In liver microsomes, this enzyme is involved in an NADPH-dependent electron transport pathway. It oxidizes a variety of structurally unrelated compounds, including steroids, fatty acids, and xenobiotics. The sequence is that of Cytochrome P450 3A12 (CYP3A12) from Canis lupus familiaris (Dog).